The sequence spans 207 residues: Ribonuclease HII (207 aa).

Positions 12–205 constitute an RNase H type-2 domain; sequence GLVVGIDEVG…IRNMIEAEAH (194 aa). A divalent metal cation is bound by residues Asp18, Glu19, and Asp114.

Belongs to the RNase HII family. It depends on Mn(2+) as a cofactor. Requires Mg(2+) as cofactor.

The protein localises to the cytoplasm. It catalyses the reaction Endonucleolytic cleavage to 5'-phosphomonoester.. In terms of biological role, endonuclease that specifically degrades the RNA of RNA-DNA hybrids. The sequence is that of Ribonuclease HII from Gluconobacter oxydans (strain 621H) (Gluconobacter suboxydans).